Reading from the N-terminus, the 150-residue chain is uncharacterized protein (150 aa).

This sequence belongs to the aspartate/glutamate racemases family.

This is an uncharacterized protein from Pectobacterium carotovorum subsp. carotovorum (Erwinia carotovora subsp. carotovora).